Consider the following 333-residue polypeptide: Procathepsin L (333 aa).

The N-terminal stretch at 1–17 (MNPTLILAAFCLGIASA) is a signal peptide. Residues 18–113 (TLTFDHSLEA…KVFQEPLFYE (96 aa)) constitute a propeptide, activation peptide. Residue Glu122 coordinates Zn(2+). Disulfide bonds link Cys135/Cys178 and Cys169/Cys211. Cys138 is an active-site residue. 5 residues coordinate Zn(2+): Glu163, Asp184, Glu199, Glu205, and Glu209. Residue Asn221 is glycosylated (N-linked (GlcNAc...) asparagine). The Zn(2+) site is built by Asp227, Asp250, His253, Asp273, and Asp275. A disulfide bridge links Cys269 with Cys322. Residue His276 is part of the active site. Positions 289-291 (ESD) are excised as a propeptide. Asn300 is an active-site residue.

The protein belongs to the peptidase C1 family. In terms of assembly, dimer of a heavy and a light chain linked by disulfide bonds. Interacts with Long isoform of CD74/Ii chain; the interaction stabilizes the conformation of mature CTSL. In terms of processing, during export along the endocytic pathway, pro-CTSL undergoes several proteolytic cleavages to generate the CTSL single-chain and two-chain mature forms, composed of a heavy chain linked to a light chain by disulfide bonds. Autocleavage; produces the single-chain CTSL after cleavage of the propeptide. The cleavage can be intermolecular.

It is found in the lysosome. The protein localises to the apical cell membrane. Its subcellular location is the cytoplasmic vesicle. It localises to the secretory vesicle. The protein resides in the chromaffin granule. It is found in the secreted. The protein localises to the extracellular space. Its subcellular location is the nucleus. The enzyme catalyses Specificity close to that of papain. As compared to cathepsin B, cathepsin L exhibits higher activity toward protein substrates, but has little activity on Z-Arg-Arg-NHMec, and no peptidyl-dipeptidase activity.. With respect to regulation, inhibited by the propeptide produced by autocleavage. Long isoform of CD74/Ii chain stabilizes the conformation of mature CTSL by binding to its active site and serving as a chaperone to help maintain a pool of mature enzyme in endocytic compartments and extracellular space of APCs. IFNG enhances the conversion into the CTSL mature and active form. Inhibited by CST6. Inhibited by the glycopeptide antibiotic teicoplanin. Inhibited by amantadine. Its function is as follows. Thiol protease important for the overall degradation of proteins in lysosomes. Plays a critical for normal cellular functions such as general protein turnover, antigen processing and bone remodeling. Involved in the solubilization of cross-linked TG/thyroglobulin and in the subsequent release of thyroid hormone thyroxine (T4) by limited proteolysis of TG/thyroglobulin in the thyroid follicle lumen. In neuroendocrine chromaffin cells secretory vesicles, catalyzes the prohormone proenkephalin processing to the active enkephalin peptide neurotransmitter. In thymus, regulates CD4(+) T cell positive selection by generating the major histocompatibility complex class II (MHCII) bound peptide ligands presented by cortical thymic epithelial cells. Also mediates invariant chain processing in cortical thymic epithelial cells. Major elastin-degrading enzyme at neutral pH. Accumulates as a mature and active enzyme in the extracellular space of antigen presenting cells (APCs) to regulate degradation of the extracellular matrix in the course of inflammation. Secreted form generates endostatin from COL18A1. Critical for cardiac morphology and function. Plays an important role in hair follicle morphogenesis and cycling, as well as epidermal differentiation. Required for maximal stimulation of steroidogenesis by TIMP1. Functionally, (Microbial infection) In cells lacking TMPRSS2 expression, facilitates human coronaviruses SARS-CoV and SARS-CoV-2 infections via a slow acid-activated route with the proteolysis of coronavirus spike (S) glycoproteins in lysosome for entry into host cell. Proteolysis within lysosomes is sufficient to activate membrane fusion by coronaviruses SARS-CoV and EMC (HCoV-EMC) S as well as Zaire ebolavirus glycoproteins. In terms of biological role, functions in the regulation of cell cycle progression through proteolytic processing of the CUX1 transcription factor. Translation initiation at downstream start sites allows the synthesis of isoforms that are devoid of a signal peptide and localize to the nucleus where they cleave the CUX1 transcription factor and modify its DNA binding properties. The sequence is that of Procathepsin L from Homo sapiens (Human).